Consider the following 566-residue polypeptide: Oxygen-dependent choline dehydrogenase (566 aa).

7 to 36 (DYIICGAGSAGNVLATRLTEDPDVTVLLLE) lines the FAD pocket. Residues 180 to 202 (NGYQQEGFGPMDRTVTPKGRRAS) are disordered. The active-site Proton acceptor is the His-474.

Belongs to the GMC oxidoreductase family. Requires FAD as cofactor.

It catalyses the reaction choline + A = betaine aldehyde + AH2. The catalysed reaction is betaine aldehyde + NAD(+) + H2O = glycine betaine + NADH + 2 H(+). Its pathway is amine and polyamine biosynthesis; betaine biosynthesis via choline pathway; betaine aldehyde from choline (cytochrome c reductase route): step 1/1. Its function is as follows. Involved in the biosynthesis of the osmoprotectant glycine betaine. Catalyzes the oxidation of choline to betaine aldehyde and betaine aldehyde to glycine betaine at the same rate. The sequence is that of Oxygen-dependent choline dehydrogenase from Burkholderia lata (strain ATCC 17760 / DSM 23089 / LMG 22485 / NCIMB 9086 / R18194 / 383).